The chain runs to 37 residues: MKVRPSVKPICEKCKVIRRKGNVMVICENPKHKQKQG.

It belongs to the bacterial ribosomal protein bL36 family.

The protein is Large ribosomal subunit protein bL36 of Brevibacillus brevis (strain 47 / JCM 6285 / NBRC 100599).